A 366-amino-acid chain; its full sequence is Methylthioribose-1-phosphate isomerase (366 aa).

Substrate is bound by residues 53–55, arginine 90, and glutamine 203; that span reads RGA. Residue aspartate 244 is the Proton donor of the active site. Position 254 to 255 (254 to 255) interacts with substrate; it reads NK.

It belongs to the eIF-2B alpha/beta/delta subunits family. MtnA subfamily.

It carries out the reaction 5-(methylsulfanyl)-alpha-D-ribose 1-phosphate = 5-(methylsulfanyl)-D-ribulose 1-phosphate. Its pathway is amino-acid biosynthesis; L-methionine biosynthesis via salvage pathway; L-methionine from S-methyl-5-thio-alpha-D-ribose 1-phosphate: step 1/6. Catalyzes the interconversion of methylthioribose-1-phosphate (MTR-1-P) into methylthioribulose-1-phosphate (MTRu-1-P). In Methylocella silvestris (strain DSM 15510 / CIP 108128 / LMG 27833 / NCIMB 13906 / BL2), this protein is Methylthioribose-1-phosphate isomerase.